The chain runs to 142 residues: Nucleoside diphosphate kinase (142 aa).

ATP-binding residues include K11, F59, R87, T93, R104, and N114. The active-site Pros-phosphohistidine intermediate is the H117.

This sequence belongs to the NDK family. Homotetramer. Mg(2+) is required as a cofactor.

The protein resides in the cytoplasm. It carries out the reaction a 2'-deoxyribonucleoside 5'-diphosphate + ATP = a 2'-deoxyribonucleoside 5'-triphosphate + ADP. The enzyme catalyses a ribonucleoside 5'-diphosphate + ATP = a ribonucleoside 5'-triphosphate + ADP. Its function is as follows. Major role in the synthesis of nucleoside triphosphates other than ATP. The ATP gamma phosphate is transferred to the NDP beta phosphate via a ping-pong mechanism, using a phosphorylated active-site intermediate. The protein is Nucleoside diphosphate kinase of Pectobacterium carotovorum subsp. carotovorum (strain PC1).